Reading from the N-terminus, the 94-residue chain is Integration host factor subunit beta (94 aa).

The protein belongs to the bacterial histone-like protein family. As to quaternary structure, heterodimer of an alpha and a beta chain.

In terms of biological role, this protein is one of the two subunits of integration host factor, a specific DNA-binding protein that functions in genetic recombination as well as in transcriptional and translational control. The protein is Integration host factor subunit beta (ihfB) of Dickeya dadantii (strain 3937) (Erwinia chrysanthemi (strain 3937)).